We begin with the raw amino-acid sequence, 889 residues long: MGDLNKHTFLSRVFGSASNPLLNDDNNDIEFSINNLQDTFEEHQVESPPRAPHPINVNSEDESSSETESASNEDLLYDQKRELYQQVESELRQDDYDTVPESLMMERRRPHEGSTRTIGTKIPPSPAEPPIGPNITQWGEKARGIASRTLDNIPKTIAKGISFQLPANASSKLPPPPLSYRRETSVGGETEMAQNINEQRQLRGRLGLLSPMERALWLWSNVSNLDTFLEDVYGYYTGNGYRCIILSRVSDLLIIVFVVWLTSFMGNCVDYNQLMNGNATKYSDVVVDKCYSKISLSQKLFFLVLFAILVLRIKSFYSHFKDLKEIKNFYNLLLGVSDEELQTISWSTIVKKIKVLRDQNTNALISGNQNLRGDDLKSKKRLSAHDIANRLMRKENYMIAIFNKNVLAPALTIPFINHHFLTKTLEWNLKLCIFDFVFNTDGQLKQAVLSEHKRLALATEMRKRFRLAGILSIFLTPFLVIYFLLYFFLKFFYDIKTNPSLVGSREYSPYARWKLREFNELPHMFDKRLKMSRARATEYINQFPKEATNIILNFVAFVTGSLVTILVVLTVLGHENFLNFELTEGRTVLFYISTLGAVFTICKGSVSENDTVFDPEASLRYVAQFTHYLPNSWNGRFHTEEVKNEFCKLFNLRLILVLKEITSLIMLPYILYCRLPDVSEKVIDFFREFSVHVDGLGYVCTFAMFEFDSKDKPVRSQAANDDDDLKQEYYTADDDKMVKSYLYFLESYGNESVRKTGKEPAVDRISRRPGKKNLLRSAMMNNSMMDKSRGAQSTVRYPPQFRSPNLAESVYTKRQNIDLMEDTTAGLSTDTRNYLQTLNNSTLLGESFQHGFPVEDTTHHEEDADSEDDDEAGVLGLINQIYKHKEGVN.

At 1–248 the chain is on the cytoplasmic side; sequence MGDLNKHTFL…NGYRCIILSR (248 aa). Disordered regions lie at residues 41–77 and 108–132; these read EEHQ…DLLY and RRPH…PPIG. Pro residues predominate over residues 123–132; sequence PPSPAEPPIG. The helical transmembrane segment at 249 to 269 threads the bilayer; the sequence is VSDLLIIVFVVWLTSFMGNCV. Residues 270–299 lie on the Lumenal side of the membrane; sequence DYNQLMNGNATKYSDVVVDKCYSKISLSQK. The helical transmembrane segment at 300–320 threads the bilayer; sequence LFFLVLFAILVLRIKSFYSHF. Over 321-395 the chain is Cytoplasmic; it reads KDLKEIKNFY…DIANRLMRKE (75 aa). An intramembrane region is located at residue N396. The Cytoplasmic segment spans residues 397-468; the sequence is YMIAIFNKNV…TEMRKRFRLA (72 aa). The helical transmembrane segment at 469–489 threads the bilayer; the sequence is GILSIFLTPFLVIYFLLYFFL. The Lumenal segment spans residues 490–549; sequence KFFYDIKTNPSLVGSREYSPYARWKLREFNELPHMFDKRLKMSRARATEYINQFPKEATN. The helical transmembrane segment at 550-570 threads the bilayer; sequence IILNFVAFVTGSLVTILVVLT. The Cytoplasmic portion of the chain corresponds to 571–651; that stretch reads VLGHENFLNF…VKNEFCKLFN (81 aa). The stretch at 652–672 is an intramembrane region; it reads LRLILVLKEITSLIMLPYILY. Topologically, residues 673–889 are cytoplasmic; the sequence is CRLPDVSEKV…QIYKHKEGVN (217 aa).

It belongs to the ATG9 family. Homotrimer; forms a homotrimer with a central pore that forms a path between the two membrane leaflets. Post-translationally, phosphorylated by ATG1. ATG1 phosphorylation is required for preautophagosome elongation.

The protein resides in the preautophagosomal structure membrane. The protein localises to the cytoplasmic vesicle membrane. It localises to the golgi apparatus membrane. It is found in the endoplasmic reticulum membrane. It catalyses the reaction a 1,2-diacyl-sn-glycero-3-phosphocholine(in) = a 1,2-diacyl-sn-glycero-3-phosphocholine(out). It carries out the reaction a 1,2-diacyl-sn-glycero-3-phospho-L-serine(in) = a 1,2-diacyl-sn-glycero-3-phospho-L-serine(out). The enzyme catalyses a 1,2-diacyl-sn-glycero-3-phosphoethanolamine(in) = a 1,2-diacyl-sn-glycero-3-phosphoethanolamine(out). The catalysed reaction is a 1,2-diacyl-sn-glycero-3-phospho-(1D-myo-inositol-3-phosphate)(in) = a 1,2-diacyl-sn-glycero-3-phospho-(1D-myo-inositol-3-phosphate)(out). Its function is as follows. Phospholipid scramblase involved in autophagy and cytoplasm to vacuole transport (Cvt) vesicle formation. Cycles between the preautophagosomal structure/phagophore assembly site (PAS) and the cytoplasmic vesicle pool and supplies membrane for the growing autophagosome. Lipid scramblase activity plays a key role in preautophagosomal structure/phagophore assembly by distributing the phospholipids that arrive through ATG2 from the cytoplasmic to the luminal leaflet of the bilayer, thereby driving autophagosomal membrane expansion. Required for mitophagy. Also involved in endoplasmic reticulum-specific autophagic process and is essential for the survival of cells subjected to severe ER stress. Different machineries are required for anterograde trafficking to the PAS during either the Cvt pathway or bulk autophagy and for retrograde trafficking. The protein is Autophagy-related protein 9 (ATG9) of Pichia angusta (Yeast).